The sequence spans 269 residues: 4-hydroxy-tetrahydrodipicolinate reductase (269 aa).

NAD(+)-binding positions include 11–16 and Glu-37; that span reads GASGRM. An NADP(+)-binding site is contributed by Arg-38. NAD(+) is bound by residues 101-103 and 125-128; these read GTT and AGNM. Catalysis depends on His-158, which acts as the Proton donor/acceptor. A (S)-2,3,4,5-tetrahydrodipicolinate-binding site is contributed by His-159. The active-site Proton donor is Lys-162. 168 to 169 is a binding site for (S)-2,3,4,5-tetrahydrodipicolinate; the sequence is GT.

Belongs to the DapB family.

The protein resides in the cytoplasm. The enzyme catalyses (S)-2,3,4,5-tetrahydrodipicolinate + NAD(+) + H2O = (2S,4S)-4-hydroxy-2,3,4,5-tetrahydrodipicolinate + NADH + H(+). The catalysed reaction is (S)-2,3,4,5-tetrahydrodipicolinate + NADP(+) + H2O = (2S,4S)-4-hydroxy-2,3,4,5-tetrahydrodipicolinate + NADPH + H(+). Its pathway is amino-acid biosynthesis; L-lysine biosynthesis via DAP pathway; (S)-tetrahydrodipicolinate from L-aspartate: step 4/4. In terms of biological role, catalyzes the conversion of 4-hydroxy-tetrahydrodipicolinate (HTPA) to tetrahydrodipicolinate. The sequence is that of 4-hydroxy-tetrahydrodipicolinate reductase from Ruegeria pomeroyi (strain ATCC 700808 / DSM 15171 / DSS-3) (Silicibacter pomeroyi).